The chain runs to 523 residues: Probable DNA ligase (523 aa).

Glu-210 provides a ligand contact to ATP. Residue Lys-212 is the N6-AMP-lysine intermediate of the active site. The ATP site is built by Arg-217, Arg-232, Glu-261, Phe-317, Arg-388, and Lys-394.

Belongs to the ATP-dependent DNA ligase family. Mg(2+) is required as a cofactor.

It catalyses the reaction ATP + (deoxyribonucleotide)n-3'-hydroxyl + 5'-phospho-(deoxyribonucleotide)m = (deoxyribonucleotide)n+m + AMP + diphosphate.. DNA ligase that seals nicks in double-stranded DNA during DNA replication, DNA recombination and DNA repair. The protein is Probable DNA ligase of Nocardia farcinica (strain IFM 10152).